Here is a 5005-residue protein sequence, read N- to C-terminus: Bridge-like lipid transfer protein family member 1 (5005 aa).

Residues 26-46 (NVVWLLVATILSCGWIIYLTY) form a helical membrane-spanning segment. Disordered regions lie at residues 691 to 721 (LRPS…LPPD), 1218 to 1257 (LSLQ…SSVA), and 1269 to 1310 (GTKR…LKRQ). Composition is skewed to low complexity over residues 700 to 711 (RVVSSPSTSSRP) and 1226 to 1240 (SHSS…SSSS). Basic and acidic residues predominate over residues 1248–1257 (GEKESPSSVA). Positions 1278-1303 (SIPTEISGNSPVSPNTQDKSVGQSPL) are enriched in polar residues. Ser1301, Ser1305, and Ser1323 each carry phosphoserine. Thr1325 bears the Phosphothreonine mark. Disordered regions lie at residues 1343–1376 (SDVS…SNSF), 1400–1427 (EFEP…QQID), 1521–1548 (TNKR…SSSF), and 1676–1704 (FSEN…QGQA). Ser1355 and Ser1406 each carry phosphoserine. Over residues 1521–1530 (TNKRTSKSSL) the composition is skewed to basic residues. A compositionally biased stretch (polar residues) spans 1691–1704 (TEQSTIGTTNQGQA). Phosphoserine occurs at positions 1805 and 1808. 3 disordered regions span residues 1924 to 1991 (DTER…PLMP), 2401 to 2420 (SDQN…QDDV), and 2598 to 2677 (TAGS…KDVV). Polar residues-rich tracts occupy residues 1931–1948 (LTSN…YNTD), 1959–1971 (TSPS…NSVS), 2401–2418 (SDQN…TSQD), and 2598–2608 (TAGSASPTPTF). Residues Ser2601 and Ser2603 each carry the phosphoserine modification. Residues 2619-2638 (SDFSRSSRGSLNGGNRVNNA) show a composition bias toward low complexity. Over residues 2643 to 2665 (TNNENNKKESRNKNSLGRSERRT) the composition is skewed to basic and acidic residues. Ser2755 carries the phosphoserine modification. The disordered stretch occupies residues 2928-2967 (RQPSTAPQPVKEDIATPLPSEKTPTSVNQTPVETNEFPQL). The segment covering 2949-2964 (KTPTSVNQTPVETNEF) has biased composition (polar residues). Ser3562 is subject to Phosphoserine. Over residues 3612–3622 (PSYSRSKSISA) the composition is skewed to polar residues. 6 disordered regions span residues 3612 to 3661 (PSYS…VTFN), 3686 to 3744 (SSNS…ERFY), 3821 to 3843 (RRSY…KKFQ), 3914 to 3954 (YGMK…KGKG), 4088 to 4146 (GTTY…SSSS), and 4325 to 4394 (QSAS…KAAS). Ser3653 is subject to Phosphoserine. The span at 3686–3700 (SSNSEGSCSVFSSPK) shows a compositional bias: polar residues. Residues 3727–3736 (EDSEKDEKDE) show a composition bias toward acidic residues. Positions 3821 to 3837 (RRSYDRSSRSLDQDSPS) are enriched in basic and acidic residues. Composition is skewed to polar residues over residues 3931 to 3940 (TVQSKTNTLL) and 4098 to 4113 (PGGN…SASK). The span at 4122 to 4146 (LGSPLGRSRHSSSQSDLTSSSSSSS) shows a compositional bias: low complexity. Phosphoserine is present on Ser4124. A compositionally biased stretch (polar residues) spans 4325-4358 (QSASFTHMPQSPNVFNEHMTNSTMSPGTVGQSLK). A compositionally biased stretch (low complexity) spans 4359–4372 (SPASIRSRSVSDSS). The segment covering 4381 to 4394 (KTSTPFNKSNKAAS) has biased composition (polar residues).

Highly expressed in testis and ovary. Weakly or not expressed in other tissues.

The protein resides in the cell membrane. Its subcellular location is the endoplasmic reticulum membrane. It localises to the mitochondrion membrane. Functionally, tube-forming lipid transport protein which provides phosphatidylethanolamine for glycosylphosphatidylinositol (GPI) anchor synthesis in the endoplasmic reticulum. Plays a role in endosomal trafficking and endosome recycling. Also involved in the actin cytoskeleton and cilia structural dynamics. Acts as a regulator of phagocytosis. The protein is Bridge-like lipid transfer protein family member 1 of Homo sapiens (Human).